Consider the following 333-residue polypeptide: Ferrochelatase (333 aa).

The Fe cation site is built by His-202 and Glu-284.

This sequence belongs to the ferrochelatase family.

The protein resides in the cytoplasm. The enzyme catalyses heme b + 2 H(+) = protoporphyrin IX + Fe(2+). Its pathway is porphyrin-containing compound metabolism; protoheme biosynthesis; protoheme from protoporphyrin-IX: step 1/1. Functionally, catalyzes the ferrous insertion into protoporphyrin IX. This chain is Ferrochelatase, found in Francisella tularensis subsp. mediasiatica (strain FSC147).